The primary structure comprises 529 residues: Peptide chain release factor 3 (529 aa).

Residues asparagine 11–glutamine 280 enclose the tr-type G domain. GTP contacts are provided by residues serine 20–threonine 27, aspartate 88–histidine 92, and asparagine 142–aspartate 145.

The protein belongs to the TRAFAC class translation factor GTPase superfamily. Classic translation factor GTPase family. PrfC subfamily.

The protein resides in the cytoplasm. In terms of biological role, increases the formation of ribosomal termination complexes and stimulates activities of RF-1 and RF-2. It binds guanine nucleotides and has strong preference for UGA stop codons. It may interact directly with the ribosome. The stimulation of RF-1 and RF-2 is significantly reduced by GTP and GDP, but not by GMP. This chain is Peptide chain release factor 3, found in Mannheimia succiniciproducens (strain KCTC 0769BP / MBEL55E).